Reading from the N-terminus, the 377-residue chain is MMSKLFTPLQVGFCQLKHRVIMAPLTRFRADDNNVPLPIAKEYYSQRASVPGTLIIAEATYISLAAGGYPNVPGIWSPEQIARWKEITDAVHAQGSYIFLQLWALGRVGDADTLKQDGFDLISSSAVPVDAGEPVPRAMTEEEIKQYIALYAQAARNAVMAGFDGVELHGGNGYLVDQFTQDTCNRRTDSWGGSIPNRSRFAVEVTRAMVQAIGSERVAVKLTPWNDQQGMKMKDMEQQFLHLITSLKELKLAYLHLTNPRVSVDEDVPLQGPPDGHPLEDNAGFVKAWGETSPVFLGGGYTPQSAKHTLDVDYPLNEIGAVFGRLFISNPDLPLRLRDGLPFTPYDRDSFYTPLSPIGYSDYPFSDQAVDLIPVRV.

NADP(+)-binding positions include 170–173, 257–263, and 293–295; these read GGNG, LTNPRVS, and SPV.

It belongs to the NADP-dependent oxidoreductase L4BD family.

It participates in secondary metabolite biosynthesis. Functionally, NADP-dependent oxidoreductase; part of the lnb gene cluster that mediates the biosynthesis of diastereomeric piperazines. Lna and lnb clusters encode sets of enzymes that produce overlapping sets of previously undescribed metabolites such as piperazinomycin-like metabolites or morpholine. The lna and lnb biosynthetic pathways appear to be part of a signaling network that controls the formation of sclerotia, a resilient overwintering structure. One primary function of the non-canonical nonribosomal peptide synthetases lnaA and lnbA consists in the reduction of L-tyrosine. The presence in the clusters of tailoring enzymes such as the oxidoreductases lnaB, lnbB, lnaE or lnbE, as well as of the cytochrome P450 monooxygenases lnaC, lnaD, or lnbC, might explain formation of various diastereomeric piperazines. The protein is NADP-dependent oxidoreductase lnbE of Aspergillus flavus (strain ATCC 200026 / FGSC A1120 / IAM 13836 / NRRL 3357 / JCM 12722 / SRRC 167).